Here is a 274-residue protein sequence, read N- to C-terminus: SPbeta prophage-derived uncharacterized protein YomD (274 aa).

The chain is SPbeta prophage-derived uncharacterized protein YomD (yomD) from Bacillus subtilis (strain 168).